We begin with the raw amino-acid sequence, 466 residues long: Methylenetetrahydrofolate--tRNA-(uracil-5-)-methyltransferase TrmFO (466 aa).

14-19 contacts FAD; that stretch reads GGGLAG.

It belongs to the MnmG family. TrmFO subfamily. FAD is required as a cofactor.

The protein resides in the cytoplasm. The catalysed reaction is uridine(54) in tRNA + (6R)-5,10-methylene-5,6,7,8-tetrahydrofolate + NADH + H(+) = 5-methyluridine(54) in tRNA + (6S)-5,6,7,8-tetrahydrofolate + NAD(+). It catalyses the reaction uridine(54) in tRNA + (6R)-5,10-methylene-5,6,7,8-tetrahydrofolate + NADPH + H(+) = 5-methyluridine(54) in tRNA + (6S)-5,6,7,8-tetrahydrofolate + NADP(+). Catalyzes the folate-dependent formation of 5-methyl-uridine at position 54 (M-5-U54) in all tRNAs. The protein is Methylenetetrahydrofolate--tRNA-(uracil-5-)-methyltransferase TrmFO of Brucella melitensis biotype 1 (strain ATCC 23456 / CCUG 17765 / NCTC 10094 / 16M).